The sequence spans 890 residues: Leucine-rich repeat receptor-like tyrosine-protein kinase PXC3 (890 aa).

An N-terminal signal peptide occupies residues 1-23 (MTFWCMSILLIVGFLSKSELCEA). Over 24 to 534 (QLSDEATLVA…LRYNHRVSYR (511 aa)) the chain is Extracellular. 4 N-linked (GlcNAc...) asparagine glycosylation sites follow: Asn-46, Asn-61, Asn-78, and Asn-108. LRR repeat units follow at residues 67-85 (MLDL…ISDL), 86-108 (RSLK…SFGN), 110-132 (SELE…EFGK), 133-157 (LRGL…LKVL), 159-181 (RLEE…VGNL), 182-205 (SSLR…LGLV), 206-229 (SELE…IFEK), 231-254 (KLKV…GICS), 256-276 (LSSI…TIGN), 278-300 (SGLT…EFSK), 301-325 (CSNL…LGQL), 326-349 (INLQ…FLGS), 350-373 (GNLN…LCSM), 375-397 (RLQY…IGNC), 399-421 (KLLQ…IGRM), 422-446 (RNLQ…LGKL), 447-469 (DKLV…LLKG), and 471-492 (MSLI…VFVP). Residues Asn-140, Asn-171, and Asn-180 are each glycosylated (N-linked (GlcNAc...) asparagine). Residues Asn-276, Asn-289, and Asn-303 are each glycosylated (N-linked (GlcNAc...) asparagine). Residue Asn-363 is glycosylated (N-linked (GlcNAc...) asparagine). Asn-429 carries N-linked (GlcNAc...) asparagine glycosylation. Asn-477 and Asn-498 each carry an N-linked (GlcNAc...) asparagine glycan. A helical membrane pass occupies residues 535–555 (IVLAVIGSGVAVFVSVTVVVL). Residues 556 to 890 (LFMMREKQEK…EMLQEVKQIK (335 aa)) lie on the Cytoplasmic side of the membrane. One can recognise a Protein kinase domain in the interval 608-886 (MKESNKLSTG…KKVVEMLQEV (279 aa)). ATP-binding positions include 614–622 (LSTGTFSSV) and Lys-636. Asp-735 (proton acceptor) is an active-site residue.

It belongs to the protein kinase superfamily. Tyr protein kinase family. As to expression, expressed in the vascular strands of cotyledons, the shoot apex, hypocotyls, roots, leaves, stems and flowers.

The protein resides in the cell membrane. The enzyme catalyses L-tyrosyl-[protein] + ATP = O-phospho-L-tyrosyl-[protein] + ADP + H(+). Its function is as follows. Leucine-rich repeat receptor-like protein kinase that may play a role in vascular tissues development. This is Leucine-rich repeat receptor-like tyrosine-protein kinase PXC3 from Arabidopsis thaliana (Mouse-ear cress).